The following is a 102-amino-acid chain: Large ribosomal subunit protein bL21 (102 aa).

Belongs to the bacterial ribosomal protein bL21 family. As to quaternary structure, part of the 50S ribosomal subunit. Contacts protein L20.

Its function is as follows. This protein binds to 23S rRNA in the presence of protein L20. The protein is Large ribosomal subunit protein bL21 of Bacillus licheniformis (strain ATCC 14580 / DSM 13 / JCM 2505 / CCUG 7422 / NBRC 12200 / NCIMB 9375 / NCTC 10341 / NRRL NRS-1264 / Gibson 46).